A 156-amino-acid polypeptide reads, in one-letter code: Small ribosomal subunit protein uS7 (156 aa).

This sequence belongs to the universal ribosomal protein uS7 family. As to quaternary structure, part of the 30S ribosomal subunit. Contacts proteins S9 and S11.

One of the primary rRNA binding proteins, it binds directly to 16S rRNA where it nucleates assembly of the head domain of the 30S subunit. Is located at the subunit interface close to the decoding center, probably blocks exit of the E-site tRNA. This is Small ribosomal subunit protein uS7 from Aeromonas salmonicida (strain A449).